The sequence spans 358 residues: Probable protein phosphatase 2C 34 (358 aa).

The PPM-type phosphatase domain occupies 62–349; the sequence is LASVFSRRGE…DDISAVCLFF (288 aa). Mn(2+) contacts are provided by Asp98, Gly99, Asp294, and Asp340.

This sequence belongs to the PP2C family. Mg(2+) serves as cofactor. Mn(2+) is required as a cofactor.

The catalysed reaction is O-phospho-L-seryl-[protein] + H2O = L-seryl-[protein] + phosphate. It catalyses the reaction O-phospho-L-threonyl-[protein] + H2O = L-threonyl-[protein] + phosphate. The polypeptide is Probable protein phosphatase 2C 34 (Arabidopsis thaliana (Mouse-ear cress)).